The primary structure comprises 314 residues: Methionyl-tRNA formyltransferase (314 aa).

Position 110 to 113 (110 to 113 (SLLP)) interacts with (6S)-5,6,7,8-tetrahydrofolate.

It belongs to the Fmt family.

It catalyses the reaction L-methionyl-tRNA(fMet) + (6R)-10-formyltetrahydrofolate = N-formyl-L-methionyl-tRNA(fMet) + (6S)-5,6,7,8-tetrahydrofolate + H(+). In terms of biological role, attaches a formyl group to the free amino group of methionyl-tRNA(fMet). The formyl group appears to play a dual role in the initiator identity of N-formylmethionyl-tRNA by promoting its recognition by IF2 and preventing the misappropriation of this tRNA by the elongation apparatus. In Bacillus thuringiensis subsp. konkukian (strain 97-27), this protein is Methionyl-tRNA formyltransferase.